A 325-amino-acid polypeptide reads, in one-letter code: Beta-1,3-galactosyltransferase brn (325 aa).

At 1 to 7 (MQSKHRK) the chain is on the cytoplasmic side. The helical; Signal-anchor for type II membrane protein transmembrane segment at 8–28 (LLLRCLLVLPLILLVDYCGLL) threads the bilayer. The Lumenal segment spans residues 29–325 (THLHELNFER…WNECRSANYA (297 aa)). N-linked (GlcNAc...) asparagine glycans are attached at residues Asn-149 and Asn-166.

This sequence belongs to the glycosyltransferase 31 family.

It is found in the golgi apparatus membrane. The enzyme catalyses a ganglioside GM2 (d18:1(4E)) + UDP-alpha-D-galactose = a ganglioside GM1 (d18:1(4E)) + UDP + H(+). Neurogenic protein essential for the development and maintenance of epithelial structure. Required in the germline for establishing the follicular epithelium and for determining the dorsal-ventral polarity. Collaborates with Notch on the apical surface of follicle cells to mediate germline-follicle cell adhesion. Brn has a role in chorion formation. In Drosophila melanogaster (Fruit fly), this protein is Beta-1,3-galactosyltransferase brn (brn).